The following is a 107-amino-acid chain: Integration host factor subunit beta (107 aa).

Residues 56–107 are disordered; the sequence is RPSRVGRNPKSGEKVLVPEKHVPHFKPGKELRERVDRNAGEPLKADAADDDL. Positions 65-107 are enriched in basic and acidic residues; sequence KSGEKVLVPEKHVPHFKPGKELRERVDRNAGEPLKADAADDDL.

Belongs to the bacterial histone-like protein family. Heterodimer of an alpha and a beta chain.

In terms of biological role, this protein is one of the two subunits of integration host factor, a specific DNA-binding protein that functions in genetic recombination as well as in transcriptional and translational control. The polypeptide is Integration host factor subunit beta (Paraburkholderia phymatum (strain DSM 17167 / CIP 108236 / LMG 21445 / STM815) (Burkholderia phymatum)).